We begin with the raw amino-acid sequence, 121 residues long: Large ribosomal subunit protein bL12 (121 aa).

The protein belongs to the bacterial ribosomal protein bL12 family. As to quaternary structure, homodimer. Part of the ribosomal stalk of the 50S ribosomal subunit. Forms a multimeric L10(L12)X complex, where L10 forms an elongated spine to which 2 to 4 L12 dimers bind in a sequential fashion. Binds GTP-bound translation factors.

Functionally, forms part of the ribosomal stalk which helps the ribosome interact with GTP-bound translation factors. Is thus essential for accurate translation. The polypeptide is Large ribosomal subunit protein bL12 (Streptococcus equi subsp. equi (strain 4047)).